The chain runs to 972 residues: FHF complex subunit HOOK-interacting protein 1B (972 aa).

4 disordered regions span residues 465–496 (APSP…VPRP), 510–547 (SLSG…AGEL), 573–642 (SAPY…PGSW), and 710–733 (SFTC…NQLP). Phosphoserine is present on S467. Over residues 479–490 (GPGSPSVDSSSV) the composition is skewed to low complexity. 4 positions are modified to phosphoserine: S510, S523, S529, and S533. A compositionally biased stretch (low complexity) spans 523–535 (SPGLSASPASSPG). The span at 618–627 (GLAGGAGEGP) shows a compositional bias: gly residues. Phosphoserine is present on residues S859 and S897.

This sequence belongs to the FHIP family. In terms of assembly, component of the FTS/Hook/FHIP complex (FHF complex), composed of AKTIP/FTS, FHIP1B, and one or more members of the Hook family of proteins HOOK1, HOOK2, and HOOK3. The FHF complex associates with the homotypic vesicular sorting complex (the HOPS complex).

In terms of biological role, component of the FTS/Hook/FHIP complex (FHF complex). The FHF complex may function to promote vesicle trafficking and/or fusion via the homotypic vesicular protein sorting complex (the HOPS complex). FHF complex promotes the distribution of AP-4 complex to the perinuclear area of the cell. The sequence is that of FHF complex subunit HOOK-interacting protein 1B (FHIP1B) from Pongo abelii (Sumatran orangutan).